The chain runs to 413 residues: L-cysteine:1D-myo-inositol 2-amino-2-deoxy-alpha-D-glucopyranoside ligase (413 aa).

Residue Cys-43 coordinates Zn(2+). L-cysteinyl-5'-AMP-binding positions include 43–46 (CGIT), Thr-58, and 81–83 (NIT). Positions 45–55 (ITPYDATHLGH) match the 'HIGH' region motif. The short motif at 187-192 (ERGGDP) is the 'ERGGDP' region element. L-cysteinyl-5'-AMP is bound at residue Trp-227. Cys-231 provides a ligand contact to Zn(2+). 249-251 (GND) provides a ligand contact to L-cysteinyl-5'-AMP. His-256 provides a ligand contact to Zn(2+). Val-283 is a binding site for L-cysteinyl-5'-AMP. A 'KMSKS' region motif is present at residues 289–293 (KMSKS).

This sequence belongs to the class-I aminoacyl-tRNA synthetase family. MshC subfamily. In terms of assembly, monomer. Requires Zn(2+) as cofactor.

The catalysed reaction is 1D-myo-inositol 2-amino-2-deoxy-alpha-D-glucopyranoside + L-cysteine + ATP = 1D-myo-inositol 2-(L-cysteinylamino)-2-deoxy-alpha-D-glucopyranoside + AMP + diphosphate + H(+). In terms of biological role, catalyzes the ATP-dependent condensation of GlcN-Ins and L-cysteine to form L-Cys-GlcN-Ins. In Gordonia bronchialis (strain ATCC 25592 / DSM 43247 / BCRC 13721 / JCM 3198 / KCTC 3076 / NBRC 16047 / NCTC 10667) (Rhodococcus bronchialis), this protein is L-cysteine:1D-myo-inositol 2-amino-2-deoxy-alpha-D-glucopyranoside ligase.